The chain runs to 86 residues: Exodeoxyribonuclease 7 small subunit (86 aa).

The protein belongs to the XseB family. Heterooligomer composed of large and small subunits.

The protein localises to the cytoplasm. The enzyme catalyses Exonucleolytic cleavage in either 5'- to 3'- or 3'- to 5'-direction to yield nucleoside 5'-phosphates.. Functionally, bidirectionally degrades single-stranded DNA into large acid-insoluble oligonucleotides, which are then degraded further into small acid-soluble oligonucleotides. The protein is Exodeoxyribonuclease 7 small subunit of Xanthomonas euvesicatoria pv. vesicatoria (strain 85-10) (Xanthomonas campestris pv. vesicatoria).